Reading from the N-terminus, the 293-residue chain is Pyridoxal 5'-phosphate synthase subunit PdxS (293 aa).

A D-ribose 5-phosphate-binding site is contributed by Asp-25. Residue Lys-82 is the Schiff-base intermediate with D-ribose 5-phosphate of the active site. A D-ribulose 5-phosphate-binding site is contributed by Asp-103. Residue Gly-154 participates in D-ribose 5-phosphate binding. Arg-166 is a binding site for D-glyceraldehyde 3-phosphate. Residues Gly-215 and 236–237 each bind D-ribose 5-phosphate; that span reads GS.

The protein belongs to the PdxS/SNZ family. As to quaternary structure, homohexamer and homododecamer. In the presence of PdxT, forms a dodecamer of heterodimers.

The enzyme catalyses aldehydo-D-ribose 5-phosphate + D-glyceraldehyde 3-phosphate + L-glutamine = pyridoxal 5'-phosphate + L-glutamate + phosphate + 3 H2O + H(+). It participates in cofactor biosynthesis; pyridoxal 5'-phosphate biosynthesis. Functionally, catalyzes the formation of pyridoxal 5'-phosphate from ribose 5-phosphate (RBP), glyceraldehyde 3-phosphate (G3P) and ammonia. The ammonia is provided by the PdxT subunit. Can also use ribulose 5-phosphate and dihydroxyacetone phosphate as substrates, resulting from enzyme-catalyzed isomerization of RBP and G3P, respectively. This chain is Pyridoxal 5'-phosphate synthase subunit PdxS, found in Thermotoga maritima (strain ATCC 43589 / DSM 3109 / JCM 10099 / NBRC 100826 / MSB8).